We begin with the raw amino-acid sequence, 153 residues long: Transcriptional repressor NrdR (153 aa).

A zinc finger spans residues 3–34 (CPFCNHLHDKVVDSRESKEGDAIRRRRECLEC). In terms of domain architecture, ATP-cone spans 49–139 (YMVVKKDGRR…VYRDFQDEQA (91 aa)).

The protein belongs to the NrdR family. Requires Zn(2+) as cofactor.

Functionally, negatively regulates transcription of bacterial ribonucleotide reductase nrd genes and operons by binding to NrdR-boxes. In Solibacter usitatus (strain Ellin6076), this protein is Transcriptional repressor NrdR.